The following is a 271-amino-acid chain: p-hydroxybenzoate hydroxylase transcriptional activator (271 aa).

Positions isoleucine 23–histidine 83 constitute an HTH iclR-type domain. A DNA-binding region (H-T-H motif) is located at residues valine 45 to lysine 64. Positions leucine 98–valine 271 constitute an IclR-ED domain.

Its function is as follows. Positive regulator of the pobA gene for p-hydroxybenzoate hydroxylase. This chain is p-hydroxybenzoate hydroxylase transcriptional activator (pobR), found in Acinetobacter baylyi (strain ATCC 33305 / BD413 / ADP1).